A 98-amino-acid chain; its full sequence is DNA-binding protein Fis (98 aa).

A DNA-binding region (H-T-H motif) is located at residues 74 to 93 (QTKAANMMGINRGTLRKKLK).

This sequence belongs to the transcriptional regulatory Fis family. Homodimer.

Activates ribosomal RNA transcription. Plays a direct role in upstream activation of rRNA promoters. The polypeptide is DNA-binding protein Fis (Aliivibrio fischeri (strain ATCC 700601 / ES114) (Vibrio fischeri)).